Here is a 447-residue protein sequence, read N- to C-terminus: Phosphoglucosamine mutase (447 aa).

Serine 107 serves as the catalytic Phosphoserine intermediate. Serine 107, aspartate 246, aspartate 248, and aspartate 250 together coordinate Mg(2+). Residue serine 107 is modified to Phosphoserine.

It belongs to the phosphohexose mutase family. Requires Mg(2+) as cofactor. In terms of processing, activated by phosphorylation.

It carries out the reaction alpha-D-glucosamine 1-phosphate = D-glucosamine 6-phosphate. In terms of biological role, catalyzes the conversion of glucosamine-6-phosphate to glucosamine-1-phosphate. This chain is Phosphoglucosamine mutase, found in Ralstonia nicotianae (strain ATCC BAA-1114 / GMI1000) (Ralstonia solanacearum).